Here is a 554-residue protein sequence, read N- to C-terminus: Valerianol synthase TPS1E (554 aa).

The Mg(2+) site is built by aspartate 307 and aspartate 311. The DDXXD motif signature appears at 326 to 330 (VQRWD). Mg(2+)-binding residues include aspartate 452, serine 456, and glutamate 460.

It belongs to the terpene synthase family. Requires Mg(2+) as cofactor.

It catalyses the reaction (2E,6E)-farnesyl diphosphate + H2O = valerianol + diphosphate. It functions in the pathway secondary metabolite biosynthesis; terpenoid biosynthesis. Functionally, terpene synthase that catalyzes the biosynthesis of the terpene valerianol, which is a volatile compound of floral scent. The protein is Valerianol synthase TPS1E of Camellia hiemalis (Camellia).